Consider the following 335-residue polypeptide: Tryptophan--tRNA ligase (335 aa).

Residues 13-15 (QPS) and 21-22 (GN) each bind ATP. The 'HIGH' region signature appears at 14–22 (PSGELTIGN). Residue Asp-138 coordinates L-tryptophan. Residues 150 to 152 (GKD), Ile-189, and 198 to 202 (KMSKS) contribute to the ATP site. The 'KMSKS' region signature appears at 198 to 202 (KMSKS).

The protein belongs to the class-I aminoacyl-tRNA synthetase family. Homodimer.

It is found in the cytoplasm. The enzyme catalyses tRNA(Trp) + L-tryptophan + ATP = L-tryptophyl-tRNA(Trp) + AMP + diphosphate + H(+). Catalyzes the attachment of tryptophan to tRNA(Trp). The chain is Tryptophan--tRNA ligase from Clostridium acetobutylicum (strain ATCC 824 / DSM 792 / JCM 1419 / IAM 19013 / LMG 5710 / NBRC 13948 / NRRL B-527 / VKM B-1787 / 2291 / W).